The sequence spans 85 residues: Photosystem I reaction center subunit PsaK (85 aa).

The next 2 membrane-spanning stretches (helical) occupy residues 12–34 (TVTWSPKVALVMIVCNVIAIAVG) and 54–76 (GGMGHAALLGTTSLGHIIGIGAI).

This sequence belongs to the PsaG/PsaK family.

It is found in the cellular thylakoid membrane. The polypeptide is Photosystem I reaction center subunit PsaK (Parasynechococcus marenigrum (strain WH8102)).